Consider the following 137-residue polypeptide: Holo-[acyl-carrier-protein] synthase (137 aa).

The Mg(2+) site is built by D8 and E57.

The protein belongs to the P-Pant transferase superfamily. AcpS family. It depends on Mg(2+) as a cofactor.

The protein resides in the cytoplasm. The enzyme catalyses apo-[ACP] + CoA = holo-[ACP] + adenosine 3',5'-bisphosphate + H(+). Functionally, transfers the 4'-phosphopantetheine moiety from coenzyme A to a Ser of acyl-carrier-protein. The chain is Holo-[acyl-carrier-protein] synthase from Mesorhizobium japonicum (strain LMG 29417 / CECT 9101 / MAFF 303099) (Mesorhizobium loti (strain MAFF 303099)).